The sequence spans 265 residues: Neuronal membrane glycoprotein M6-b (265 aa).

The helical transmembrane segment at 31–51 threads the bilayer; it reads GGVPYASLVATILCFSGVALF. N-linked (GlcNAc...) asparagine glycosylation is present at Asn73. The next 2 membrane-spanning stretches (helical) occupy residues 90-110 and 136-156; these read VIYGIASFFFLYVIILLAEGF and FVFLTYVLGVAWLGVFGFSAV. Asn177 carries N-linked (GlcNAc...) asparagine glycosylation. Residues 224–244 form a helical membrane-spanning segment; that stretch reads LFIVACAGAGATVIALLIYMM. Residue Ser257 is modified to Phosphoserine.

It belongs to the myelin proteolipid protein family. In terms of assembly, interacts with SERT.

The protein localises to the membrane. The protein resides in the cell membrane. Its function is as follows. May be involved in neural development. Involved in regulation of osteoblast function and bone formation. Involved in matrix vesicle release by osteoblasts; this function seems to involve maintenance of the actin cytoskeleton. May be involved in cellular trafficking of SERT and thereby in regulation of serotonin uptake. This is Neuronal membrane glycoprotein M6-b (GPM6B) from Pongo abelii (Sumatran orangutan).